A 550-amino-acid chain; its full sequence is Probable asparagine synthetase [glutamine-hydrolyzing] (550 aa).

The For GATase activity role is filled by Cys2. The Glutamine amidotransferase type-2 domain occupies 2 to 189 (CGIICFIQYG…PNQYVTIDLS (188 aa)). Residues 53 to 57 (RLAIM), 78 to 80 (NGE), and Asp100 each bind L-glutamine. The Asparagine synthetase domain occupies 213-530 (YYQSHKSLID…GGRDHIIPHY (318 aa)). ATP is bound by residues Leu256, Val284, and 360–361 (SG).

It catalyses the reaction L-aspartate + L-glutamine + ATP + H2O = L-asparagine + L-glutamate + AMP + diphosphate + H(+). It functions in the pathway amino-acid biosynthesis; L-asparagine biosynthesis; L-asparagine from L-aspartate (L-Gln route): step 1/1. The protein is Probable asparagine synthetase [glutamine-hydrolyzing] of Acanthamoeba polyphaga mimivirus (APMV).